The primary structure comprises 294 residues: UPF0282 protein APE_0500.1 (294 aa).

It belongs to the UPF0282 family.

The polypeptide is UPF0282 protein APE_0500.1 (Aeropyrum pernix (strain ATCC 700893 / DSM 11879 / JCM 9820 / NBRC 100138 / K1)).